Consider the following 876-residue polypeptide: DNA mismatch repair protein MutS (876 aa).

An ATP-binding site is contributed by 626–633; the sequence is GPNMAGKS. The tract at residues 829–856 is disordered; sequence FRAAPPPPAPAAPPKASQVEERLRAIQP. A compositionally biased stretch (pro residues) spans 832-841; the sequence is APPPPAPAAP.

Belongs to the DNA mismatch repair MutS family.

In terms of biological role, this protein is involved in the repair of mismatches in DNA. It is possible that it carries out the mismatch recognition step. This protein has a weak ATPase activity. In Cereibacter sphaeroides (strain ATCC 17025 / ATH 2.4.3) (Rhodobacter sphaeroides), this protein is DNA mismatch repair protein MutS.